Reading from the N-terminus, the 450-residue chain is Plasmepsin VII (450 aa).

The first 24 residues, 1–24, serve as a signal peptide directing secretion; that stretch reads MNKNIIQIYLFVFILLLKQHIVIL. Residues 92–441 form the Peptidase A1 domain; sequence YYGEVQIGEQ…DKDNLKIGFV (350 aa). Catalysis depends on residues Asp111 and Asp324.

The protein belongs to the peptidase A1 family.

It is found in the cytoplasm. In Plasmodium falciparum (isolate NF54), this protein is Plasmepsin VII.